The following is a 487-amino-acid chain: NGFI-A-binding protein 1 (487 aa).

The NCD1 stretch occupies residues 4 to 82; sequence ALPRTLGELQ…RDWVTNPGLF (79 aa). Residues Lys-126, Lys-129, and Lys-143 each participate in a glycyl lysine isopeptide (Lys-Gly) (interchain with G-Cter in SUMO2) cross-link. The tract at residues 162–188 is disordered; sequence QGHHATESEHSLSPADLGSPASPKESS. Phosphoserine is present on residues Ser-172 and Ser-183. Residue Lys-212 forms a Glycyl lysine isopeptide (Lys-Gly) (interchain with G-Cter in SUMO2) linkage. An NCD2 region spans residues 221 to 310; that stretch reads LLKTNKKLAK…ARQISREVTY (90 aa). Residues 307–338 form a necessary for nuclear localization region; it reads EVTYKYTYRTTKSKCGERDELSPKRIKVEDGF. Ser-328 carries the post-translational modification Phosphoserine. A Glycyl lysine isopeptide (Lys-Gly) (interchain with G-Cter in SUMO1); alternate cross-link involves residue Lys-333. Residue Lys-333 forms a Glycyl lysine isopeptide (Lys-Gly) (interchain with G-Cter in SUMO2); alternate linkage. Glycyl lysine isopeptide (Lys-Gly) (interchain with G-Cter in SUMO2) cross-links involve residues Lys-355, Lys-369, and Lys-373. The segment at 399 to 434 is disordered; the sequence is YRQSSEEHSPNGLTSDNSDGQGERPLNLRMPNLQNR. Phosphoserine is present on Ser-407. Positions 409–418 are enriched in polar residues; that stretch reads NGLTSDNSDG. Residues Lys-454, Lys-465, and Lys-477 each participate in a glycyl lysine isopeptide (Lys-Gly) (interchain with G-Cter in SUMO2) cross-link. Lys-480 is covalently cross-linked (Glycyl lysine isopeptide (Lys-Gly) (interchain with G-Cter in SUMO1); alternate). Lys-480 participates in a covalent cross-link: Glycyl lysine isopeptide (Lys-Gly) (interchain with G-Cter in SUMO2); alternate.

Belongs to the NAB family. As to quaternary structure, homomultimers may associate with EGR1 bound to DNA. As to expression, isoform Short is found in myeloid leukemia cell line KG-1.

The protein localises to the nucleus. Acts as a transcriptional repressor for zinc finger transcription factors EGR1 and EGR2. This is NGFI-A-binding protein 1 (NAB1) from Homo sapiens (Human).